Here is a 374-residue protein sequence, read N- to C-terminus: Glutamate 5-kinase (374 aa).

Lys16 provides a ligand contact to ATP. Substrate contacts are provided by Ser56, Asp143, and Asn155. ATP is bound at residue 175–176; that stretch reads TD. Residues 282–360 form the PUA domain; the sequence is RGRVVLDAGA…SEIEAVLGYV (79 aa).

The protein belongs to the glutamate 5-kinase family.

Its subcellular location is the cytoplasm. The enzyme catalyses L-glutamate + ATP = L-glutamyl 5-phosphate + ADP. The protein operates within amino-acid biosynthesis; L-proline biosynthesis; L-glutamate 5-semialdehyde from L-glutamate: step 1/2. Functionally, catalyzes the transfer of a phosphate group to glutamate to form L-glutamate 5-phosphate. The sequence is that of Glutamate 5-kinase from Ralstonia pickettii (strain 12J).